Consider the following 387-residue polypeptide: 4-hydroxy-3-methylbut-2-en-1-yl diphosphate synthase (flavodoxin) (387 aa).

Residues cysteine 293, cysteine 296, cysteine 328, and glutamate 335 each coordinate [4Fe-4S] cluster.

This sequence belongs to the IspG family. Requires [4Fe-4S] cluster as cofactor.

The catalysed reaction is (2E)-4-hydroxy-3-methylbut-2-enyl diphosphate + oxidized [flavodoxin] + H2O + 2 H(+) = 2-C-methyl-D-erythritol 2,4-cyclic diphosphate + reduced [flavodoxin]. Its pathway is isoprenoid biosynthesis; isopentenyl diphosphate biosynthesis via DXP pathway; isopentenyl diphosphate from 1-deoxy-D-xylulose 5-phosphate: step 5/6. Its function is as follows. Converts 2C-methyl-D-erythritol 2,4-cyclodiphosphate (ME-2,4cPP) into 1-hydroxy-2-methyl-2-(E)-butenyl 4-diphosphate. The sequence is that of 4-hydroxy-3-methylbut-2-en-1-yl diphosphate synthase (flavodoxin) from Treponema denticola (strain ATCC 35405 / DSM 14222 / CIP 103919 / JCM 8153 / KCTC 15104).